Consider the following 160-residue polypeptide: Transcription elongation factor GreA (160 aa).

Residues 49-77 are a coiled coil; the sequence is SEYQSAKDEQAFVEGRIQTLKNMIDNAEI.

It belongs to the GreA/GreB family.

Its function is as follows. Necessary for efficient RNA polymerase transcription elongation past template-encoded arresting sites. The arresting sites in DNA have the property of trapping a certain fraction of elongating RNA polymerases that pass through, resulting in locked ternary complexes. Cleavage of the nascent transcript by cleavage factors such as GreA or GreB allows the resumption of elongation from the new 3'terminus. GreA releases sequences of 2 to 3 nucleotides. This Leuconostoc mesenteroides subsp. mesenteroides (strain ATCC 8293 / DSM 20343 / BCRC 11652 / CCM 1803 / JCM 6124 / NCDO 523 / NBRC 100496 / NCIMB 8023 / NCTC 12954 / NRRL B-1118 / 37Y) protein is Transcription elongation factor GreA.